We begin with the raw amino-acid sequence, 589 residues long: UvrABC system protein C (589 aa).

In terms of domain architecture, GIY-YIG spans 10-87; that stretch reads ESSGVYLMKK…IKKYSPKYNI (78 aa). In terms of domain architecture, UVR spans 197–232; that stretch reads SKLINELTALMNKASQDMDFEKSIIYREQIKELKSI.

The protein belongs to the UvrC family. As to quaternary structure, interacts with UvrB in an incision complex.

It localises to the cytoplasm. In terms of biological role, the UvrABC repair system catalyzes the recognition and processing of DNA lesions. UvrC both incises the 5' and 3' sides of the lesion. The N-terminal half is responsible for the 3' incision and the C-terminal half is responsible for the 5' incision. The sequence is that of UvrABC system protein C from Fusobacterium nucleatum subsp. nucleatum (strain ATCC 25586 / DSM 15643 / BCRC 10681 / CIP 101130 / JCM 8532 / KCTC 2640 / LMG 13131 / VPI 4355).